Reading from the N-terminus, the 349-residue chain is MPVLHNRISNETLKERMLAETEPRITISFYKYFSIAEPQETRDALYKAFESLNVFGRVYLAHEGINAQISVPESKVSAFRDFLYSFDPALNNVRLNIALDDDGKSFWVLRMKVRERIVADGIDDPTFNASDVGEYLKAAEVNAMLDDPDAVFIDMRNHYEYEVGHFENALEIPADTFREQLPKAVEMMQEHKDKKIIMYCTGGIRCEKASAWMKHSGFNKVWHIEGGIIEYARRAREQGLPVRFIGKNFVFDERMGERISEDIIAHCHQCGTPCDTHTNCKNDGCHLLFIQCPTCAEKFRGCCSELCSEESVLPEEEQRRRRAGRENGNKIFNKSRGRLNTKLGIPDPE.

The Rhodanese domain occupies D146–L240. Catalysis depends on C200, which acts as the Cysteine persulfide intermediate. Residues E316 to G328 are compositionally biased toward basic and acidic residues. Residues E316 to E349 are disordered.

It belongs to the TrhO family.

It catalyses the reaction uridine(34) in tRNA + AH2 + O2 = 5-hydroxyuridine(34) in tRNA + A + H2O. In terms of biological role, catalyzes oxygen-dependent 5-hydroxyuridine (ho5U) modification at position 34 in tRNAs. This chain is tRNA uridine(34) hydroxylase, found in Enterobacter sp. (strain 638).